A 447-amino-acid polypeptide reads, in one-letter code: Na(+)/H(+) antiporter NhaA 2 (447 aa).

10 consecutive transmembrane segments (helical) span residues 34-54 (VGGV…NSPW), 77-97 (LTLG…VVGL), 115-135 (ALPI…FVLV), 146-166 (GWAI…AVIG), 176-196 (FLLT…AVFY), 200-220 (INGL…LCVQ), 290-310 (VSAG…SIGG), 321-341 (PITL…IVLT), 359-379 (WVDV…SLLI), and 393-413 (FVKI…AVVL).

Belongs to the NhaA Na(+)/H(+) (TC 2.A.33) antiporter family.

Its subcellular location is the cell membrane. It catalyses the reaction Na(+)(in) + 2 H(+)(out) = Na(+)(out) + 2 H(+)(in). Its function is as follows. Na(+)/H(+) antiporter that extrudes sodium in exchange for external protons. This chain is Na(+)/H(+) antiporter NhaA 2, found in Mycolicibacterium gilvum (strain PYR-GCK) (Mycobacterium gilvum (strain PYR-GCK)).